The chain runs to 255 residues: Propionicin-F (255 aa).

Propeptides lie at residues 1 to 101 (MNTK…RVSC) and 145 to 255 (GTPT…DETV).

Its subcellular location is the secreted. Its function is as follows. Bacteriocin with specific antibacterial activity against strains of P.freudenreichii. No antibacterial activity was detected against P.acidipropionici, P.jensenii and P.thoenii. The polypeptide is Propionicin-F (Propionibacterium freudenreichii subsp. freudenreichii).